The following is a 162-amino-acid chain: Nucleotide-binding protein Adeh_0094 (162 aa).

It belongs to the YajQ family.

Functionally, nucleotide-binding protein. The protein is Nucleotide-binding protein Adeh_0094 of Anaeromyxobacter dehalogenans (strain 2CP-C).